Here is a 387-residue protein sequence, read N- to C-terminus: Monomeric sarcosine oxidase (387 aa).

Residue 6–36 (DVIVVGAGSMGMAAGYYLAKQGVKTLLVDSF) participates in FAD binding. At cysteine 316 the chain carries S-8alpha-FAD cysteine.

Belongs to the MSOX/MTOX family. MSOX subfamily. Monomer. FAD serves as cofactor.

The protein resides in the cytoplasm. It carries out the reaction sarcosine + O2 + H2O = formaldehyde + glycine + H2O2. In terms of biological role, catalyzes the oxidative demethylation of sarcosine. The polypeptide is Monomeric sarcosine oxidase (soxA) (Bacillus sp. (strain NS-129)).